A 577-amino-acid polypeptide reads, in one-letter code: Glycine--tRNA ligase (577 aa).

Substrate-binding residues include arginine 96 and glutamate 161. ATP contacts are provided by residues 193-195 (RNE), 203-208 (IRLREF), 319-320 (EI), and 434-437 (GIDR). A substrate-binding site is contributed by 208-212 (FSQAE). 430-434 (EPSFG) contributes to the substrate binding site.

The protein belongs to the class-II aminoacyl-tRNA synthetase family.

The protein resides in the cytoplasm. It catalyses the reaction tRNA(Gly) + glycine + ATP = glycyl-tRNA(Gly) + AMP + diphosphate. Functionally, catalyzes the attachment of glycine to tRNA(Gly). The protein is Glycine--tRNA ligase of Methanothrix thermoacetophila (strain DSM 6194 / JCM 14653 / NBRC 101360 / PT) (Methanosaeta thermophila).